The sequence spans 496 residues: Lysosomal Pro-X carboxypeptidase (496 aa).

Residues 1–21 form the signal peptide; that stretch reads MGRRALLLLLLSFLAPWTTIA. A propeptide spanning residues 22 to 45 is cleaved from the precursor; it reads LRPALRALGSLHLPTNPTSLPAVA. N-linked (GlcNAc...) asparagine glycosylation is found at N47 and N101. The Charge relay system role is filled by S179. An SKS domain region spans residues 194–334; it reads HMVVGALAAS…QNIFQALNVY (141 aa). Cystine bridges form between C215–C372, C233–C310, C264–C343, and C364–C394. N-linked (GlcNAc...) asparagine glycans are attached at residues N317, N336, and N345. N415 carries an N-linked (GlcNAc...) asparagine glycan. Catalysis depends on charge relay system residues D430 and H455.

This sequence belongs to the peptidase S28 family. In terms of assembly, homodimer.

The protein resides in the lysosome. It catalyses the reaction Cleavage of a -Pro-|-Xaa bond to release a C-terminal amino acid.. In terms of biological role, cleaves C-terminal amino acids linked to proline in peptides such as angiotensin II, III and des-Arg9-bradykinin. This cleavage occurs at acidic pH, but enzymatic activity is retained with some substrates at neutral pH. This chain is Lysosomal Pro-X carboxypeptidase (PRCP), found in Pongo abelii (Sumatran orangutan).